The sequence spans 615 residues: Alpha-fetoprotein (615 aa).

Positions 1–15 (MAVLPLSGAIRLSRG) are cleaved as a signal peptide. Positions 14-16 (RGD) match the Cell attachment site motif. 3 consecutive Albumin domains span residues 27–218 (WAKK…RRQA), 223–415 (KPIR…ELKK), and 416–609 (HIYE…VLVT). 2 cysteine pairs are disulfide-bonded: Cys109–Cys121 and Cys120–Cys131. 2 N-linked (GlcNAc...) asparagine glycosylation sites follow: Asn137 and Asn157. 9 cysteine pairs are disulfide-bonded: Cys155-Cys200, Cys199-Cys213, Cys236-Cys282, Cys281-Cys289, Cys301-Cys315, Cys314-Cys325, Cys396-Cys405, Cys428-Cys458, and Cys457-Cys468. The short motif at 283-285 (RGD) is the Cell attachment site element. A glycan (N-linked (GlcNAc...) asparagine) is linked at Asn472. Disulfide bonds link Cys485/Cys501, Cys500/Cys511, Cys538/Cys593, and Cys592/Cys601.

The protein belongs to the ALB/AFP/VDB family. As to quaternary structure, dimeric and trimeric forms have been found in addition to the monomeric form. Sulfated.

It is found in the secreted. Functionally, binds copper, nickel, and fatty acids as well as, and bilirubin less well than, serum albumin. The polypeptide is Alpha-fetoprotein (AFP) (Gallus gallus (Chicken)).